The chain runs to 143 residues: Large ribosomal subunit protein uL22c (143 aa).

The protein belongs to the universal ribosomal protein uL22 family. Part of the 50S ribosomal subunit.

Its subcellular location is the plastid. The protein localises to the chloroplast. In terms of biological role, this protein binds specifically to 23S rRNA. Its function is as follows. The globular domain of the protein is located near the polypeptide exit tunnel on the outside of the subunit, while an extended beta-hairpin is found that lines the wall of the exit tunnel in the center of the 70S ribosome. The chain is Large ribosomal subunit protein uL22c (rpl22) from Piper cenocladum (Ant piper).